The primary structure comprises 85 residues: Beta-insect depressant toxin Lqh-dprIT3f (85 aa).

Positions 1–21 (MKLLLLLTISASMLIEGLVNA) are cleaved as a signal peptide. The LCN-type CS-alpha/beta domain occupies 22–82 (DGYIRGGDGC…EWDYETDTCG (61 aa)). 4 cysteine pairs are disulfide-bonded: C31–C81, C35–C56, C42–C63, and C46–C65. G82 carries the post-translational modification Glycine amide.

Belongs to the long (4 C-C) scorpion toxin superfamily. Sodium channel inhibitor family. Beta subfamily. In terms of tissue distribution, expressed by the venom gland.

It localises to the secreted. Its function is as follows. Depressant insect beta-toxins cause a transient contraction paralysis followed by a slow flaccid paralysis. They bind voltage-independently at site-4 of sodium channels (Nav) and block action potentials, primarily by depolarizing the axonal membrane and suppressing the sodium current. This depressant toxin is active only on insects. It is found in a relatively small amount in the venom. The sequence is that of Beta-insect depressant toxin Lqh-dprIT3f from Leiurus hebraeus (Hebrew deathstalker scorpion).